The chain runs to 380 residues: Queuine tRNA-ribosyltransferase (380 aa).

Asp89 serves as the catalytic Proton acceptor. Residues 89-93, Asp143, Gln187, and Gly214 contribute to the substrate site; that span reads DSGGF. Positions 245-251 are RNA binding; it reads GVGKPED. Asp264 functions as the Nucleophile in the catalytic mechanism. Residues 269-273 are RNA binding; important for wobble base 34 recognition; sequence TRNAR. Zn(2+) contacts are provided by Cys302, Cys304, Cys307, and His333.

Belongs to the queuine tRNA-ribosyltransferase family. In terms of assembly, homodimer. Within each dimer, one monomer is responsible for RNA recognition and catalysis, while the other monomer binds to the replacement base PreQ1. It depends on Zn(2+) as a cofactor.

The enzyme catalyses 7-aminomethyl-7-carbaguanine + guanosine(34) in tRNA = 7-aminomethyl-7-carbaguanosine(34) in tRNA + guanine. The protein operates within tRNA modification; tRNA-queuosine biosynthesis. In terms of biological role, catalyzes the base-exchange of a guanine (G) residue with the queuine precursor 7-aminomethyl-7-deazaguanine (PreQ1) at position 34 (anticodon wobble position) in tRNAs with GU(N) anticodons (tRNA-Asp, -Asn, -His and -Tyr). Catalysis occurs through a double-displacement mechanism. The nucleophile active site attacks the C1' of nucleotide 34 to detach the guanine base from the RNA, forming a covalent enzyme-RNA intermediate. The proton acceptor active site deprotonates the incoming PreQ1, allowing a nucleophilic attack on the C1' of the ribose to form the product. After dissociation, two additional enzymatic reactions on the tRNA convert PreQ1 to queuine (Q), resulting in the hypermodified nucleoside queuosine (7-(((4,5-cis-dihydroxy-2-cyclopenten-1-yl)amino)methyl)-7-deazaguanosine). This Proteus mirabilis (strain HI4320) protein is Queuine tRNA-ribosyltransferase.